Here is a 58-residue protein sequence, read N- to C-terminus: MPSVKVRVGEPVDRALRILKKKVDKEGILKAAKAHRFYDKPSVKKRAKSKAAAKYRSR.

The tract at residues 39–58 (DKPSVKKRAKSKAAAKYRSR) is disordered. Residues 43 to 58 (VKKRAKSKAAAKYRSR) are compositionally biased toward basic residues.

This sequence belongs to the bacterial ribosomal protein bS21 family.

The protein is Small ribosomal subunit protein bS21 of Chlamydia abortus (strain DSM 27085 / S26/3) (Chlamydophila abortus).